Reading from the N-terminus, the 631-residue chain is ATP-dependent RNA helicase mrh4, mitochondrial (631 aa).

The transit peptide at 1-45 (MNRLGRLPLPLPPSVCLFCRFRATASLPSSLQATRSMATARLRRR) directs the protein to the mitochondrion. A disordered region spans residues 68-112 (KERFGPFAGMNQTEARIRETPRARSRAAQKRSGEPEEDSQKESPL). A compositionally biased stretch (basic and acidic residues) spans 98 to 108 (RSGEPEEDSQK). The Q motif signature appears at 141-174 (TSFDQFQLLPVVRNSISSQALPGLVDVTPTPIQR). The segment covering 180–193 (LLEEPKTEKKPTKA) has biased composition (basic and acidic residues). Residues 180–199 (LLEEPKTEKKPTKADDDEPR) form a disordered region. The Helicase ATP-binding domain occupies 194-406 (DDDEPRYDQY…RKRYPDIKRL (213 aa)). ATP is bound at residue 207-214 (AETGSGKT). A disordered region spans residues 229-249 (EARDKELEKKEQEEKAREREE). The DEAD box signature appears at 353 to 356 (DEAD). One can recognise a Helicase C-terminal domain in the interval 455 to 631 (GPYASYVAPK…EGMFRGQALI (177 aa)).

This sequence belongs to the DEAD box helicase family. MRH4 subfamily.

It localises to the mitochondrion. The catalysed reaction is ATP + H2O = ADP + phosphate + H(+). Functionally, ATP-binding RNA helicase involved in mitochondrial RNA metabolism. Required for maintenance of mitochondrial DNA. The sequence is that of ATP-dependent RNA helicase mrh4, mitochondrial (mrh4) from Aspergillus fumigatus (strain ATCC MYA-4609 / CBS 101355 / FGSC A1100 / Af293) (Neosartorya fumigata).